We begin with the raw amino-acid sequence, 387 residues long: Protein RecA (387 aa).

78–85 serves as a coordination point for ATP; the sequence is GPESSGKT. Residues 355–369 show a composition bias toward basic and acidic residues; the sequence is KSIERDTKETKETKS. A disordered region spans residues 355–387; that stretch reads KSIERDTKETKETKSKQPVSFSTEADGDIAVGE.

This sequence belongs to the RecA family.

The protein localises to the cytoplasm. Functionally, can catalyze the hydrolysis of ATP in the presence of single-stranded DNA, the ATP-dependent uptake of single-stranded DNA by duplex DNA, and the ATP-dependent hybridization of homologous single-stranded DNAs. It interacts with LexA causing its activation and leading to its autocatalytic cleavage. The protein is Protein RecA of Leptospira biflexa serovar Patoc (strain Patoc 1 / ATCC 23582 / Paris).